The chain runs to 262 residues: Type II pantothenate kinase (262 aa).

7-14 (DAGGSLVK) lines the ATP pocket. Glutamate 71 (proton acceptor) is an active-site residue. ATP contacts are provided by residues threonine 101, 119-123 (GGLLT), and tyrosine 135.

This sequence belongs to the type II pantothenate kinase family. In terms of assembly, homodimer.

Its subcellular location is the cytoplasm. It catalyses the reaction (R)-pantothenate + ATP = (R)-4'-phosphopantothenate + ADP + H(+). The protein operates within cofactor biosynthesis; coenzyme A biosynthesis; CoA from (R)-pantothenate: step 1/5. Functionally, catalyzes the phosphorylation of pantothenate (Pan), the first step in CoA biosynthesis. The sequence is that of Type II pantothenate kinase from Oceanobacillus iheyensis (strain DSM 14371 / CIP 107618 / JCM 11309 / KCTC 3954 / HTE831).